A 660-amino-acid chain; its full sequence is Squalene--hopene cyclase (660 aa).

The stretch at 73-114 (EAKIGNYLRRVQGAHGGWPLVHDGEFDMSASVKAYFALKMIG) is one PFTB 1 repeat. Catalysis depends on Asp-394, which acts as the Proton donor. 2 PFTB repeats span residues 419-460 (IDRG…GALL) and 536-586 (IRKA…ALMA).

This sequence belongs to the terpene cyclase/mutase family.

It localises to the cell membrane. The enzyme catalyses squalene = hop-22(29)-ene. It carries out the reaction squalene + H2O = hopan-22-ol. The protein operates within secondary metabolite biosynthesis; hopanoid biosynthesis. Functionally, catalyzes the cyclization of squalene into hopene. The protein is Squalene--hopene cyclase (shc) of Bradyrhizobium diazoefficiens (strain JCM 10833 / BCRC 13528 / IAM 13628 / NBRC 14792 / USDA 110).